We begin with the raw amino-acid sequence, 333 residues long: L-lactate dehydrogenase B chain (333 aa).

Residues 29–57 and arginine 99 contribute to the NAD(+) site; that span reads GQVGMACAISVLEKGLCDELALVDVLEDK. The substrate site is built by arginine 106, asparagine 138, and arginine 169. NAD(+) is bound at residue asparagine 138. Histidine 193 serves as the catalytic Proton acceptor. Threonine 248 serves as a coordination point for substrate.

This sequence belongs to the LDH/MDH superfamily. LDH family. Homotetramer.

The protein resides in the cytoplasm. It catalyses the reaction (S)-lactate + NAD(+) = pyruvate + NADH + H(+). It functions in the pathway fermentation; pyruvate fermentation to lactate; (S)-lactate from pyruvate: step 1/1. Interconverts simultaneously and stereospecifically pyruvate and lactate with concomitant interconversion of NADH and NAD(+). The polypeptide is L-lactate dehydrogenase B chain (LDHB) (Sceloporus woodi (Florida scrub lizard)).